The chain runs to 920 residues: Isoleucine--tRNA ligase (920 aa).

Residues P58–H68 carry the 'HIGH' region motif. Residue E569 coordinates L-isoleucyl-5'-AMP. The 'KMSKS' region motif lies at K610–S614. K613 lines the ATP pocket. Residues C895, C898, C910, and C913 each coordinate Zn(2+).

The protein belongs to the class-I aminoacyl-tRNA synthetase family. IleS type 1 subfamily. As to quaternary structure, monomer. Zn(2+) is required as a cofactor.

Its subcellular location is the cytoplasm. The catalysed reaction is tRNA(Ile) + L-isoleucine + ATP = L-isoleucyl-tRNA(Ile) + AMP + diphosphate. Catalyzes the attachment of isoleucine to tRNA(Ile). As IleRS can inadvertently accommodate and process structurally similar amino acids such as valine, to avoid such errors it has two additional distinct tRNA(Ile)-dependent editing activities. One activity is designated as 'pretransfer' editing and involves the hydrolysis of activated Val-AMP. The other activity is designated 'posttransfer' editing and involves deacylation of mischarged Val-tRNA(Ile). The chain is Isoleucine--tRNA ligase from Helicobacter pylori (strain J99 / ATCC 700824) (Campylobacter pylori J99).